Here is a 314-residue protein sequence, read N- to C-terminus: DNA-directed RNA polymerase subunit alpha (314 aa).

The segment at 1-228 (MIEFEKPNIH…DHLSIFVNLT (228 aa)) is alpha N-terminal domain (alpha-NTD). The interval 245-314 (KEKMLEMTIE…DLGLSLRKED (70 aa)) is alpha C-terminal domain (alpha-CTD).

This sequence belongs to the RNA polymerase alpha chain family. As to quaternary structure, homodimer. The RNAP catalytic core consists of 2 alpha, 1 beta, 1 beta' and 1 omega subunit. When a sigma factor is associated with the core the holoenzyme is formed, which can initiate transcription.

The enzyme catalyses RNA(n) + a ribonucleoside 5'-triphosphate = RNA(n+1) + diphosphate. DNA-dependent RNA polymerase catalyzes the transcription of DNA into RNA using the four ribonucleoside triphosphates as substrates. This is DNA-directed RNA polymerase subunit alpha from Lactiplantibacillus plantarum (strain ATCC BAA-793 / NCIMB 8826 / WCFS1) (Lactobacillus plantarum).